Here is a 254-residue protein sequence, read N- to C-terminus: Gamma-glutamyl-gamma-aminobutyrate hydrolase (254 aa).

The Glutamine amidotransferase type-1 domain maps to Arg16–Glu250. Cys114 (nucleophile) is an active-site residue. Catalysis depends on residues His222 and Glu224.

The protein belongs to the peptidase C26 family.

It carries out the reaction 4-(gamma-L-glutamylamino)butanoate + H2O = 4-aminobutanoate + L-glutamate. Its pathway is amine and polyamine degradation; putrescine degradation; 4-aminobutanoate from putrescine: step 4/4. Functionally, involved in the breakdown of putrescine via hydrolysis of the gamma-glutamyl linkage of gamma-glutamyl-gamma-aminobutyrate. The protein is Gamma-glutamyl-gamma-aminobutyrate hydrolase (puuD) of Shigella flexneri.